The following is a 229-amino-acid chain: Ribonuclease 3 (229 aa).

The RNase III domain maps to 5–127; the sequence is LARLERQLGY…LIGAIYLDAG (123 aa). Glu40 provides a ligand contact to Mg(2+). Asp44 is a catalytic residue. Positions 113 and 116 each coordinate Mg(2+). Residue Glu116 is part of the active site. Residues 154-224 enclose the DRBM domain; that stretch reads DPKTRLQEFL…AAAALIALGV (71 aa).

This sequence belongs to the ribonuclease III family. In terms of assembly, homodimer. Requires Mg(2+) as cofactor.

The protein localises to the cytoplasm. The catalysed reaction is Endonucleolytic cleavage to 5'-phosphomonoester.. Functionally, digests double-stranded RNA. Involved in the processing of primary rRNA transcript to yield the immediate precursors to the large and small rRNAs (23S and 16S). Processes some mRNAs, and tRNAs when they are encoded in the rRNA operon. Processes pre-crRNA and tracrRNA of type II CRISPR loci if present in the organism. This Pseudomonas fluorescens (strain SBW25) protein is Ribonuclease 3.